We begin with the raw amino-acid sequence, 4912 residues long: Probable E3 ubiquitin-protein ligase HERC2 (4912 aa).

The disordered stretch occupies residues 1 to 67 (MFNRQASGGA…GSGSAAPPSH (67 aa)). Gly residues predominate over residues 8 to 17 (GGAGSSGQGA). The segment covering 18–31 (GSSQTASAAPVSAG) has biased composition (low complexity). 2 stretches are compositionally biased toward gly residues: residues 32 to 41 (VGVGGGGGAS) and 49 to 59 (SAAGSGSGSGS). RCC1 repeat units lie at residues 634-685 (NHNA…AITC), 686-739 (GGNL…ALTS), 741-789 (GLVF…ALSS), 791-843 (GQLY…ALSS), and 844-897 (SGEV…VWTQ). Disordered regions lie at residues 1102–1129 (RLSP…STSP), 1428–1475 (QLLQ…PGRG), and 1659–1681 (QEQE…EEET). Over residues 1446–1458 (SHSCHSTAGNTPT) the composition is skewed to polar residues. Residue Thr-1776 is modified to Phosphothreonine. One can recognise an MIB/HERC2 domain in the interval 1917 to 1990 (SGPDLAKLMK…QYDLQLADSA (74 aa)). 2 disordered regions span residues 1994–2018 (ASPT…SHPS) and 2381–2412 (GSIY…SGSG). A compositionally biased stretch (polar residues) spans 2396 to 2412 (ESQQPGEQDQQLSSGSG). Residues 2511–2557 (ATDAQLIGQIMEMGFTRRTVELALKQLSLQAEIMPTPEQIVQWILEH) form the UBA domain. The disordered stretch occupies residues 2572-2620 (LASSASSHDPEADSDNECPSSNSTTSSSTSSDTVEGQPMAVSGPAPPVK). The span at 2591–2604 (SSNSTTSSSTSSDT) shows a compositional bias: low complexity. The CPH domain occupies 2624–2699 (RKDFQTADLY…VCFVHIELVE (76 aa)). Residues 2780-2958 (TSATLPSLGD…FLASEYSAGV (179 aa)) form the DOC domain. 7 RCC1 repeats span residues 2985 to 3036 (PCTV…IVSQ), 3037 to 3090 (DGKV…ALTL), 3091 to 3142 (DGKV…AISS), 3144 to 3194 (GELY…TLAL), 3197 to 3248 (DGAV…ALTR), 3250 to 3300 (GEVW…AVTD), and 3302 to 3352 (GQVY…AWGL). Disordered stretches follow at residues 3352 to 3374 (LPNA…RDPL) and 3953 to 4000 (LPSS…EQPD). The span at 3974-3988 (LNSTTSLSSSTVSNV) shows a compositional bias: low complexity. RCC1 repeat units lie at residues 4049 to 4099 (STIY…AVTP), 4101 to 4153 (GKLF…ALTT), 4155 to 4205 (GEVY…AITA), 4207 to 4259 (GHVL…CITD), 4261 to 4311 (DNVW…ALTK), 4313 to 4363 (GAVY…ACSD), and 4365 to 4415 (GEVY…ALST). Residues 4547–4882 (ALALPHRVWK…IHFCKSIDTD (336 aa)) form the HECT domain. The active-site Glycyl thioester intermediate is Cys-4850. Residues 4891 to 4912 (EPTEATGSEDNSDLESVASHEG) form a disordered region.

Its subcellular location is the cytoplasm. The protein resides in the cytoskeleton. It is found in the microtubule organizing center. It localises to the centrosome. The protein localises to the centriole. The catalysed reaction is S-ubiquitinyl-[E2 ubiquitin-conjugating enzyme]-L-cysteine + [acceptor protein]-L-lysine = [E2 ubiquitin-conjugating enzyme]-L-cysteine + N(6)-ubiquitinyl-[acceptor protein]-L-lysine.. It functions in the pathway protein modification; protein ubiquitination. Probable E3 ubiquitin-protein ligase which accepts ubiquitin from an E2 ubiquitin-conjugating enzyme in the form of a thioester and then directly transfers the ubiquitin to targeted substrates. This is Probable E3 ubiquitin-protein ligase HERC2 (HERC2) from Drosophila melanogaster (Fruit fly).